A 108-amino-acid polypeptide reads, in one-letter code: Circadian clock oscillator protein KaiB (108 aa).

Belongs to the KaiB family. In terms of assembly, undergoes a major conformational rearrangment; in the free state forms homotetramers with 2 dimers. When bound to the CI domain of KaiC, KaiA or CikA switches to a monomeric thioredoxin-fold (KaiB(fs)). The KaiABC complex composition changes during the circadian cycle to control KaiC phosphorylation. Complexes KaiC(6), KaiA(2-4):KaiC(6), KaiB(6):KaiC(6) and KaiC(6):KaiB(6):KaiA(12) are among the most important forms, many form cooperatively. Binds to KaiA; 1 KaiB(fs) binds to the KaiA homodimer. Binds to the B-loop in the CI domain of KaiC; SasA and KaiB compete to bind to the CI domain. Binding to KaiC CI domain occurs 1:1. KaiA and CikA bind to the same region of KaiB(fs) and therefore compete.

Key component of the KaiABC oscillator complex, which constitutes the main circadian regulator in cyanobacteria. Its composition changes during the circadian cycle to control KaiC phosphorylation. KaiA stimulates KaiC autophosphorylation, while KaiB sequesters KaiA, leading to KaiC autodephosphorylation. KaiA binding to KaiC yields KaiA(2-4):KaiC(6) complexes which stimulate KaiC autophosphorylation. Phospho-Ser-431 KaiC accumulation triggers binding of KaiB to form the KaiB(6):KaiC(6) complex, leading to changes in the output regulators CikA and SasA. KaiB switches to a thioredoxin-like fold (KaiB(fs)) in complex with KaiC. KaiB(6):KaiC(6) formation exposes a site for KaiA binding that sequesters KaiA from the CII domain, making the KaiC(6):KaiB(6):KaiA(12) complex that results in KaiC autodephosphorylation. Complete dephosphorylation of KaiC leads to dissociation of KaiA(2):KaiB(1), completing 1 cycle of the Kai oscillator. In terms of biological role, a metamorphic protein which reversibly switches between an inactive tetrameric fold and a rare, thioredoxin-like monomeric fold (KaiB(fs)). KaiB(fs) binds phospho-KaiC, KaiA and CikA. KaiA and CikA compete for binding to KaiB(fs), and KaiB(fs) and SasA compete for binding to KaiC, thus the clock oscillator and output signal pathway are tightly coupled. This Thermosynechococcus vestitus (strain NIES-2133 / IAM M-273 / BP-1) protein is Circadian clock oscillator protein KaiB.